We begin with the raw amino-acid sequence, 699 residues long: Putative inactive kinesin-like protein KIN-7B (699 aa).

The region spanning 1 to 170 is the Kinesin motor domain; that stretch reads MRAIQKKSLC…LLFGSCAKEV (170 aa). Positions 179–247 form a coiled coil; the sequence is VMSDKALVKH…QSRLQDLLQS (69 aa). A disordered region spans residues 249–345; the sequence is GDHDLNRQVQ…VNSRHSRPSG (97 aa). Over residues 264–275 the composition is skewed to low complexity; it reads RSPPSVGMPPSV. Over residues 276–298 the composition is skewed to basic and acidic residues; it reads SRDDSSQVSHDDSDLYKEVRCIE. Positions 313–338 are enriched in polar residues; the sequence is GESSSPQDSNMNSGLHGNDSNASVNS.

It belongs to the TRAFAC class myosin-kinesin ATPase superfamily. Kinesin family. KIN-7 subfamily.

The protein is Putative inactive kinesin-like protein KIN-7B of Oryza sativa subsp. japonica (Rice).